The primary structure comprises 204 residues: ADP-ribosylation factor-like protein 15 (204 aa).

GTP contacts are provided by residues 39–46, 82–86, and 142–145; these read GLTGSGKT, ELGGA, and NHQD.

It belongs to the small GTPase superfamily. Arf family.

The polypeptide is ADP-ribosylation factor-like protein 15 (Arl15) (Mus musculus (Mouse)).